Reading from the N-terminus, the 216-residue chain is Adenylate kinase (216 aa).

ATP is bound at residue 10–15 (GAGKGT). Residues 30 to 59 (STGDMIRETIKSDSEIGKELKKVLDAGQLV) are NMP. Residues T31, R36, 57–59 (QLV), and Q92 each bind AMP. The interval 122–159 (GRRVHPASGRTYHTKFNPPKVEGKDDITGEDLITRTDD) is LID. ATP is bound by residues R123 and 132–133 (TY). R156 and R167 together coordinate AMP. An ATP-binding site is contributed by Q202.

This sequence belongs to the adenylate kinase family. As to quaternary structure, monomer.

The protein localises to the cytoplasm. The enzyme catalyses AMP + ATP = 2 ADP. The protein operates within purine metabolism; AMP biosynthesis via salvage pathway; AMP from ADP: step 1/1. Functionally, catalyzes the reversible transfer of the terminal phosphate group between ATP and AMP. Plays an important role in cellular energy homeostasis and in adenine nucleotide metabolism. In Francisella philomiragia subsp. philomiragia (strain ATCC 25017 / CCUG 19701 / FSC 153 / O#319-036), this protein is Adenylate kinase.